The primary structure comprises 464 residues: Desmin (464 aa).

Ser2 bears the Blocked amino end (Ser) mark. The segment at 2 to 100 (SQSYSSSQRV…QEFLQTRTNE (99 aa)) is head. Ser7 and Ser23 each carry phosphoserine; by CDK1. Thr65 is subject to Phosphothreonine; by CDK1. In terms of domain architecture, IF rod spans 100–408 (EKVELQELND…KLLEGEENRI (309 aa)). The coil 1A stretch occupies residues 101-133 (KVELQELNDRFANYIEKVRFLEQQNALMVAEVN). Positions 134–143 (RLRGKEPTRV) are linker 1. A coil 1B region spans residues 144–244 (AEMYEEELRE…HEEEIRELQA (101 aa)). The segment at 245-260 (QLQEQHIQVEMDISKP) is linker 12. Residues 261-279 (DLTAALRDIRAQYESIAAK) form a coil 2A region. The tract at residues 280-287 (NIAEAEEW) is linker 2. Positions 288–404 (YKSKVSDLTQ…ATYRKLLEGE (117 aa)) are coil 2B. A tail region spans residues 405–464 (ENRISIPMHQTFASALNFRETSPDQRGSEVHTKKTVMIKTIETRDGEVVSEATQQQHEVL).

It belongs to the intermediate filament family. In terms of assembly, homomer.

Its subcellular location is the cytoplasm. It is found in the myofibril. It localises to the sarcomere. The protein resides in the z line. The protein localises to the cell membrane. Its subcellular location is the sarcolemma. Functionally, muscle-specific type III intermediate filament essential for proper muscular structure and function. Plays a crucial role in maintaining the structure of sarcomeres, inter-connecting the Z-disks and forming the myofibrils, linking them not only to the sarcolemmal cytoskeleton, but also to the nucleus and mitochondria, thus providing strength for the muscle fiber during activity. In adult striated muscle they form a fibrous network connecting myofibrils to each other and to the plasma membrane from the periphery of the Z-line structures. This chain is Desmin (DES), found in Gallus gallus (Chicken).